The chain runs to 351 residues: UDP-3-O-acylglucosamine N-acyltransferase (351 aa).

His-257 serves as the catalytic Proton acceptor.

This sequence belongs to the transferase hexapeptide repeat family. LpxD subfamily. As to quaternary structure, homotrimer.

It catalyses the reaction a UDP-3-O-[(3R)-3-hydroxyacyl]-alpha-D-glucosamine + a (3R)-hydroxyacyl-[ACP] = a UDP-2-N,3-O-bis[(3R)-3-hydroxyacyl]-alpha-D-glucosamine + holo-[ACP] + H(+). It functions in the pathway bacterial outer membrane biogenesis; LPS lipid A biosynthesis. Functionally, catalyzes the N-acylation of UDP-3-O-acylglucosamine using 3-hydroxyacyl-ACP as the acyl donor. Is involved in the biosynthesis of lipid A, a phosphorylated glycolipid that anchors the lipopolysaccharide to the outer membrane of the cell. The sequence is that of UDP-3-O-acylglucosamine N-acyltransferase from Methylorubrum populi (strain ATCC BAA-705 / NCIMB 13946 / BJ001) (Methylobacterium populi).